Consider the following 326-residue polypeptide: Nicotianamine synthase 2 (326 aa).

This sequence belongs to the nicotianamine synthase (NAS)-like family. As to expression, expressed in roots.

It catalyses the reaction 3 S-adenosyl-L-methionine = nicotianamine + 3 S-methyl-5'-thioadenosine + 3 H(+). Its function is as follows. Synthesizes nicotianamine, a polyamine that is the first intermediate in the synthesis of the phytosiderophores of the mugineic acid type found in gramineae which serve as a sensor for the physiological iron status within the plant, and/or might be involved in the transport of iron. This Oryza sativa subsp. indica (Rice) protein is Nicotianamine synthase 2 (NAS2).